Here is a 404-residue protein sequence, read N- to C-terminus: MHC class I-like protein MILL1 (404 aa).

The N-terminal stretch at Met-1–Ala-30 is a signal peptide. Residues Glu-59–Gly-150 are alpha-1. Residues Asn-98, Asn-102, and Asn-165 are each glycosylated (N-linked (GlcNAc...) asparagine). The interval Leu-151 to Gly-242 is alpha-2. 2 cysteine pairs are disulfide-bonded: Cys-160–Cys-223 and Cys-262–Cys-322. The Ig-like C1-type domain maps to Pro-224 to Val-338. Residues Ser-243–Ser-342 are alpha-3. N-linked (GlcNAc...) asparagine glycosylation is present at Asn-323. Residues Gly-343 to Thr-373 are connecting peptide. Ser-374 is lipidated: GPI-anchor amidated serine. A propeptide spans Trp-375–Val-404 (removed in mature form).

The protein belongs to the MHC class I family. In terms of assembly, heterodimer with B2M. As to expression, detected in skin, esophagus, tongue, skin, muscle, uterus, ovary, testis and epididymis.

Its subcellular location is the cell membrane. The sequence is that of MHC class I-like protein MILL1 from Rattus norvegicus (Rat).